A 326-amino-acid chain; its full sequence is Sulfate/thiosulfate import ATP-binding protein CysA (326 aa).

Residues 3-237 (IEVRNVSKNF…PSNDFVYHFL (235 aa)) enclose the ABC transporter domain. 35-42 (GPSGCGKT) is a binding site for ATP.

It belongs to the ABC transporter superfamily. Sulfate/tungstate importer (TC 3.A.1.6) family. The complex is composed of two ATP-binding proteins (CysA), two transmembrane proteins (CysT and CysW) and a solute-binding protein (CysP).

Its subcellular location is the cell inner membrane. The catalysed reaction is sulfate(out) + ATP + H2O = sulfate(in) + ADP + phosphate + H(+). The enzyme catalyses thiosulfate(out) + ATP + H2O = thiosulfate(in) + ADP + phosphate + H(+). Functionally, part of the ABC transporter complex CysAWTP involved in sulfate/thiosulfate import. Responsible for energy coupling to the transport system. This Pseudomonas syringae pv. tomato (strain ATCC BAA-871 / DC3000) protein is Sulfate/thiosulfate import ATP-binding protein CysA.